The primary structure comprises 150 residues: Peptide deformylase 1 (150 aa).

Fe cation contacts are provided by Cys88 and His130. Residue Glu131 is part of the active site. His134 is a binding site for Fe cation.

It belongs to the polypeptide deformylase family. Requires Fe(2+) as cofactor.

It catalyses the reaction N-terminal N-formyl-L-methionyl-[peptide] + H2O = N-terminal L-methionyl-[peptide] + formate. Its function is as follows. Removes the formyl group from the N-terminal Met of newly synthesized proteins. Requires at least a dipeptide for an efficient rate of reaction. N-terminal L-methionine is a prerequisite for activity but the enzyme has broad specificity at other positions. In Clostridium acetobutylicum (strain ATCC 824 / DSM 792 / JCM 1419 / IAM 19013 / LMG 5710 / NBRC 13948 / NRRL B-527 / VKM B-1787 / 2291 / W), this protein is Peptide deformylase 1.